Reading from the N-terminus, the 212-residue chain is Peptidyl-prolyl cis-trans isomerase-like 3 (212 aa).

One can recognise a PPIase cyclophilin-type domain in the interval 1-198 (MSVTLHTTHG…EGEEGGYEAI (198 aa)).

It belongs to the cyclophilin-type PPIase family. PPIL3 subfamily.

The catalysed reaction is [protein]-peptidylproline (omega=180) = [protein]-peptidylproline (omega=0). Its function is as follows. PPIases accelerate the folding of proteins. It catalyzes the cis-trans isomerization of proline imidic peptide bonds in oligopeptides. This Aspergillus fumigatus (strain ATCC MYA-4609 / CBS 101355 / FGSC A1100 / Af293) (Neosartorya fumigata) protein is Peptidyl-prolyl cis-trans isomerase-like 3 (cyp10).